A 224-amino-acid polypeptide reads, in one-letter code: Elongation factor Ts (224 aa).

Positions 81–84 (TDFV) are involved in Mg(2+) ion dislocation from EF-Tu.

It belongs to the EF-Ts family.

It localises to the cytoplasm. Functionally, associates with the EF-Tu.GDP complex and induces the exchange of GDP to GTP. It remains bound to the aminoacyl-tRNA.EF-Tu.GTP complex up to the GTP hydrolysis stage on the ribosome. In Finegoldia magna (strain ATCC 29328 / DSM 20472 / WAL 2508) (Peptostreptococcus magnus), this protein is Elongation factor Ts.